The sequence spans 305 residues: MRVYIAHNGCLEAEPIYGTICELVAQRKMSVITDPHARNNESARNTDSGVVSLNQAGRNKYLDQETTSPATSRSINVPFCAGISIGGDGTFLRMARDLKNTGTPLFGVNMGRMGFLVDIEPEDIVNLVENIVKGEYTEEKRLPITASVQRGGKKIHDEWAVNEITIERKVEGKVVDIEVFVDGCRVMDISCNGIIIATATGSTAYSFSSGGPIVWPEMKVTLVVPVSPHELFAKPIVLPDNRSILLKVTSRDNKVVLCSDGQVRLCLQSGDEIACHVGKVPVVFGRVKKGCFAEHLVKKFNLQTA.

Residue Asp88 is the Proton acceptor of the active site. Residues 88–89 (DG), Arg93, 162–163 (NE), Lys173, Asn192, 203–208 (TAYSFS), and Gln262 each bind NAD(+).

The protein belongs to the NAD kinase family. A divalent metal cation is required as a cofactor.

The protein resides in the cytoplasm. It catalyses the reaction NAD(+) + ATP = ADP + NADP(+) + H(+). In terms of biological role, involved in the regulation of the intracellular balance of NAD and NADP, and is a key enzyme in the biosynthesis of NADP. Catalyzes specifically the phosphorylation on 2'-hydroxyl of the adenosine moiety of NAD to yield NADP. The sequence is that of NAD kinase from Tropheryma whipplei (strain TW08/27) (Whipple's bacillus).